Consider the following 291-residue polypeptide: Elongation factor Ts (291 aa).

An involved in Mg(2+) ion dislocation from EF-Tu region spans residues Thr78–Val81.

The protein belongs to the EF-Ts family.

The protein resides in the cytoplasm. Associates with the EF-Tu.GDP complex and induces the exchange of GDP to GTP. It remains bound to the aminoacyl-tRNA.EF-Tu.GTP complex up to the GTP hydrolysis stage on the ribosome. The chain is Elongation factor Ts from Ureaplasma parvum serovar 3 (strain ATCC 27815 / 27 / NCTC 11736).